The sequence spans 177 residues: Ribosome maturation factor RimM (177 aa).

Positions 98-177 constitute a PRC barrel domain; that stretch reads GEEFYWRELY…RIEVDWDPGF (80 aa).

It belongs to the RimM family. Binds ribosomal protein uS19.

Its subcellular location is the cytoplasm. Its function is as follows. An accessory protein needed during the final step in the assembly of 30S ribosomal subunit, possibly for assembly of the head region. Essential for efficient processing of 16S rRNA. May be needed both before and after RbfA during the maturation of 16S rRNA. It has affinity for free ribosomal 30S subunits but not for 70S ribosomes. The chain is Ribosome maturation factor RimM from Photobacterium profundum (strain SS9).